The chain runs to 3433 residues: Genome polyprotein (3433 aa).

An interaction with host EXOC1 region spans residues 2 to 15; the sequence is SKKPGGPGKSRAVN. Topologically, residues 2–108 are cytoplasmic; the sequence is SKKPGGPGKS…SSKQKKRGGK (107 aa). The segment at 37–72 is hydrophobic; homodimerization of capsid protein C; sequence LIDGKGPIRFVLALLAFFRFTAIAPTRAVLDRWRGV. A propeptide spans 106 to 123 (ER anchor for the capsid protein C, removed in mature form by serine protease NS3); sequence GGKTGIAVMIGLIASVGA. Residues 109-129 traverse the membrane as a helical segment; that stretch reads TGIAVMIGLIASVGAVTLSNF. Topologically, residues 130–248 are extracellular; the sequence is QGKVMMTVNA…KATRYLVKTE (119 aa). Asn-138 is a glycosylation site (N-linked (GlcNAc...) asparagine; by host). A helical membrane pass occupies residues 249–269; that stretch reads SWILRNPGYALVAAVIGWMLG. Residues 270–275 lie on the Cytoplasmic side of the membrane; that stretch reads SNTMQR. Residues 276-290 traverse the membrane as a helical segment; that stretch reads VVFVVLLLLVAPAYS. The Extracellular segment spans residues 291-743; it reads FNCLGMSNRD…QVFGGAFRSL (453 aa). 6 disulfide bridges follow: Cys-293-Cys-320, Cys-350-Cys-406, Cys-350-Cys-411, Cys-364-Cys-395, Cys-382-Cys-406, and Cys-382-Cys-411. Residues 388 to 401 are fusion peptide; it reads DRGWGNGCGLFGKG. Asn-444 is a glycosylation site (N-linked (GlcNAc...) asparagine; by host). 2 disulfide bridges follow: Cys-480–Cys-578 and Cys-595–Cys-626. A helical transmembrane segment spans residues 744 to 764; the sequence is FGGMSWITQGLLGALLLWMGI. Residues 765–770 are Cytoplasmic-facing; sequence NARDRS. Residues 771 to 791 form a helical membrane-spanning segment; that stretch reads IALTFLAVGGVLLFLSVNVHA. The Extracellular segment spans residues 792–1216; it reads DTGCAIDISR…AFAESNSGGD (425 aa). Disulfide bonds link Cys-795–Cys-806 and Cys-846–Cys-934. 3 N-linked (GlcNAc...) asparagine; by host glycosylation sites follow: Asn-921, Asn-966, and Asn-998. 4 disulfides stabilise this stretch: Cys-970-Cys-1014, Cys-1071-Cys-1120, Cys-1082-Cys-1103, and Cys-1104-Cys-1107. A helical membrane pass occupies residues 1217-1237; that stretch reads VVHLALMATFKIQPVFMVASF. Residues 1238-1245 are Cytoplasmic-facing; that stretch reads LKARWTNQ. Residues 1246–1268 form a helical membrane-spanning segment; that stretch reads ENILLMLAAVFFQMAYHDARQIL. Topologically, residues 1269–1288 are lumenal; sequence LWEIPDVLNSLAVAWMILRA. Residues 1289–1309 traverse the membrane as a helical segment; that stretch reads ITFTTTSNVVVPLLALLTPGL. The Cytoplasmic segment spans residues 1310–1313; that stretch reads RCLN. The chain crosses the membrane as a helical span at residues 1314 to 1331; that stretch reads LDVYRILLLMVGIGSLIR. At 1332–1345 the chain is on the lumenal side; it reads EKRSAAAKKKGASL. Residues 1346–1366 form a helical membrane-spanning segment; the sequence is LCLALASTGLFNPMILAAGLI. The Cytoplasmic segment spans residues 1367–1375; it reads ACDPNRKRG. Residues 1376 to 1396 form a helical membrane-spanning segment; the sequence is WPATEVMTAVGLMFAIVGGLA. The Lumenal portion of the chain corresponds to 1397–1399; the sequence is ELD. Residues 1400 to 1420 form a helical membrane-spanning segment; it reads IDSMAIPMTIAGLMFAAFVIS. At 1421 to 1477 the chain is on the cytoplasmic side; it reads GKSTDMWIERTADISWESDAEITGSSERVDVRLDDDGNFQLMNDPGAPWKIWMLRMV. The interacts with and activates NS3 protease stretch occupies residues 1428–1467; the sequence is IERTADISWESDAEITGSSERVDVRLDDDGNFQLMNDPGA. The helical intramembrane region spans 1478 to 1498; the sequence is CLAISAYTPWAILPSVVGFWI. Topologically, residues 1499-2174 are cytoplasmic; sequence TLQYTKRGGV…RMALEELPDA (676 aa). The region spanning 1506-1683 is the Peptidase S7 domain; the sequence is GGVLWDTPSP…ERMDEPIPAG (178 aa). Active-site charge relay system; for serine protease NS3 activity residues include His-1556, Asp-1580, and Ser-1640. A Helicase ATP-binding domain is found at 1686-1842; that stretch reads PEMLRKKQIT…ESNSPISDLQ (157 aa). Residues 1690-1693 form an important for RNA-binding region; it reads RKKQ. Position 1699–1706 (1699–1706) interacts with ATP; sequence LHPGAGKT. Residues 1790 to 1793 carry the DEAH box motif; the sequence is DEAH. The Helicase C-terminal domain maps to 1853-2018; the sequence is GYEWITEYTG…GLIAQFYQPE (166 aa). N6-acetyllysine; by host is present on Lys-1894. The interval 2169–2173 is regulates the ATPase activity of NS3 helicase; it reads EELPD. The chain crosses the membrane as a helical span at residues 2175–2195; sequence LQTIALIALLSVMTMGVFFLL. At 2196–2200 the chain is on the lumenal side; sequence MQRKG. The segment at residues 2201–2221 is an intramembrane region (helical); that stretch reads IGKIGLGGAVLGVATFFCWMA. Position 2222 (Glu-2222) is a topological domain, lumenal. The chain crosses the membrane as a helical span at residues 2223–2243; the sequence is VPGTKIAGMLLLSLLLMIVLI. The Cytoplasmic segment spans residues 2244–2258; sequence PEPEKQRSQTDNQLA. Residues 2259-2279 traverse the membrane as a helical segment; the sequence is VFLICVMTLVSAVAANEMGWL. The Lumenal portion of the chain corresponds to 2280–2312; the sequence is DKTKSDISSLFGQRIEVKENFSMGEFLLDLRPA. An intramembrane region (helical) is located at residues 2313–2333; the sequence is TAWSLYAVTTAVLTPLLKHLI. At 2334-2380 the chain is on the lumenal side; that stretch reads TSDYINTSLTSINVQASALFTLARGFPFVDVGVSALLLAAGCWGQVT. A helical membrane pass occupies residues 2381-2401; sequence LTVTVTAATLLFCHYAYMVPG. At 2402–2444 the chain is on the cytoplasmic side; the sequence is WQAEAMRSAQRRTAAGIMKNAVVDGIVATDVPELERTTPIMQK. The helical transmembrane segment at 2445–2465 threads the bilayer; it reads KVGQIMLILVSLAAVVVNPSV. Topologically, residues 2466–2470 are lumenal; it reads KTVRE. The chain crosses the membrane as a helical span at residues 2471–2491; it reads AGILITAAAVTLWENGASSVW. Residues 2492-3433 lie on the Cytoplasmic side of the membrane; sequence NATTAIGLCH…DTTLVEDTVL (942 aa). One can recognise an mRNA cap 0-1 NS5-type MT domain in the interval 2529 to 2794; sequence GGAKGRTLGE…DVNLGSGTRA (266 aa). Ser-2584 contacts S-adenosyl-L-methionine. Phosphoserine is present on Ser-2584. Lys-2589 (for 2'-O-MTase activity) is an active-site residue. Gly-2614, Trp-2615, Thr-2632, Lys-2633, Glu-2639, Asp-2659, Val-2660, Asp-2674, and Ile-2675 together coordinate S-adenosyl-L-methionine. Residue Asp-2674 is the For 2'-O-MTase activity of the active site. Active-site for 2'-O-MTase activity residues include Lys-2710 and Glu-2746. Tyr-2748 is an S-adenosyl-L-methionine binding site. Positions 2917 to 2919 match the Nuclear localization signal motif; the sequence is REK. Residues Glu-2968, His-2972, Cys-2977, and Cys-2980 each contribute to the Zn(2+) site. Residues 3058–3210 enclose the RdRp catalytic domain; it reads GKIYADDTAG…KPLDDRFATS (153 aa). His-3245, Cys-3261, and Cys-3380 together coordinate Zn(2+). A PDZ-binding motif is present at residues 3431-3433; sequence TVL.

In the N-terminal section; belongs to the class I-like SAM-binding methyltransferase superfamily. mRNA cap 0-1 NS5-type methyltransferase family. As to quaternary structure, homodimer. Interacts (via N-terminus) with host EXOC1 (via C-terminus); this interaction results in EXOC1 degradation through the proteasome degradation pathway. Interacts with host DDX56; this interaction plays an important role in genomic RNA encapsidation. Forms heterodimers with envelope protein E in the endoplasmic reticulum and Golgi. In terms of assembly, homodimer; in the endoplasmic reticulum and Golgi. As to quaternary structure, homodimer; Homohexamer when secreted. NS1 interacts with NS4B. Interacts with host complement protein CFH; this interaction leads to the degradation of C3. Forms a heterodimer with serine protease NS3. May form homooligomers. Interacts with human SPCS1. In terms of assembly, forms a heterodimer with NS2B. Interacts with NS4B. Interacts with unphosphorylated RNA-directed RNA polymerase NS5; this interaction stimulates RNA-directed RNA polymerase NS5 guanylyltransferase activity. As to quaternary structure, interacts with host RTN3; this interaction is important to remodel host cell membranes. Interacts with Serine protease/Helicase NS3. Interacts with NS1. In terms of assembly, homodimer. Interacts with host STAT2; this interaction inhibits the phosphorylation of the latter, and, when all viral proteins are present (polyprotein), targets STAT2 for degradation. Post-translationally, specific enzymatic cleavages in vivo yield mature proteins. Cleavages in the lumen of endoplasmic reticulum are performed by host signal peptidase, whereas cleavages in the cytoplasmic side are performed by serine protease NS3. Signal cleavage at the 2K-4B site requires a prior NS3 protease-mediated cleavage at the 4A-2K site. Cleaved in post-Golgi vesicles by a host furin, releasing the mature small envelope protein M, and peptide pr. This cleavage is incomplete as up to 30% of viral particles still carry uncleaved prM. In terms of processing, N-glycosylated. Post-translationally, N-glycosylated. The excreted form is glycosylated and this is required for efficient secretion of the protein from infected cells. Acetylated by host KAT5. Acetylation modulates NS3 RNA-binding and unwinding activities and plays an important positive role for viral replication. In terms of processing, phosphorylated on serines residues. This phosphorylation may trigger NS5 nuclear localization.

It is found in the virion. The protein localises to the host nucleus. Its subcellular location is the host cytoplasm. It localises to the host perinuclear region. The protein resides in the secreted. It is found in the virion membrane. The protein localises to the host endoplasmic reticulum membrane. The enzyme catalyses Selective hydrolysis of -Xaa-Xaa-|-Yaa- bonds in which each of the Xaa can be either Arg or Lys and Yaa can be either Ser or Ala.. It catalyses the reaction RNA(n) + a ribonucleoside 5'-triphosphate = RNA(n+1) + diphosphate. The catalysed reaction is a ribonucleoside 5'-triphosphate + H2O = a ribonucleoside 5'-diphosphate + phosphate + H(+). It carries out the reaction ATP + H2O = ADP + phosphate + H(+). The enzyme catalyses a 5'-end (5'-triphosphoguanosine)-ribonucleoside in mRNA + S-adenosyl-L-methionine = a 5'-end (N(7)-methyl 5'-triphosphoguanosine)-ribonucleoside in mRNA + S-adenosyl-L-homocysteine. It catalyses the reaction a 5'-end (N(7)-methyl 5'-triphosphoguanosine)-ribonucleoside in mRNA + S-adenosyl-L-methionine = a 5'-end (N(7)-methyl 5'-triphosphoguanosine)-(2'-O-methyl-ribonucleoside) in mRNA + S-adenosyl-L-homocysteine + H(+). Functionally, plays a role in virus budding by binding to the cell membrane and gathering the viral RNA into a nucleocapsid that forms the core of a mature virus particle. During virus entry, may induce genome penetration into the host cytoplasm after hemifusion induced by the surface proteins. Can migrate to the cell nucleus where it modulates host functions. Overcomes the anti-viral effects of host EXOC1 by sequestering and degrading the latter through the proteasome degradation pathway. Its function is as follows. Inhibits RNA silencing by interfering with host Dicer. In terms of biological role, prevents premature fusion activity of envelope proteins in trans-Golgi by binding to envelope protein E at pH6.0. After virion release in extracellular space, gets dissociated from E dimers. Acts as a chaperone for envelope protein E during intracellular virion assembly by masking and inactivating envelope protein E fusion peptide. prM is the only viral peptide matured by host furin in the trans-Golgi network probably to avoid catastrophic activation of the viral fusion activity in acidic Golgi compartment prior to virion release. prM-E cleavage is inefficient, and many virions are only partially matured. These uncleaved prM would play a role in immune evasion. Functionally, may play a role in virus budding. Exerts cytotoxic effects by activating a mitochondrial apoptotic pathway through M ectodomain. May display a viroporin activity. Its function is as follows. Binds to host cell surface receptor and mediates fusion between viral and cellular membranes. Envelope protein is synthesized in the endoplasmic reticulum in the form of heterodimer with protein prM. They play a role in virion budding in the ER, and the newly formed immature particle is covered with 60 spikes composed of heterodimer between precursor prM and envelope protein E. The virion is transported to the Golgi apparatus where the low pH causes dissociation of PrM-E heterodimers and formation of E homodimers. prM-E cleavage is inefficient, and many virions are only partially matured. These uncleaved prM would play a role in immune evasion. In terms of biological role, involved in immune evasion, pathogenesis and viral replication. Once cleaved off the polyprotein, is targeted to three destinations: the viral replication cycle, the plasma membrane and the extracellular compartment. Essential for viral replication. Required for formation of the replication complex and recruitment of other non-structural proteins to the ER-derived membrane structures. Excreted as a hexameric lipoparticle that plays a role against host immune response. Antagonizing the complement function. Binds to the host macrophages and dendritic cells. Inhibits signal transduction originating from Toll-like receptor 3 (TLR3). Component of the viral RNA replication complex that functions in virion assembly and antagonizes the host alpha/beta interferon antiviral response. Functionally, required cofactor for the serine protease function of NS3. May have membrane-destabilizing activity and form viroporins. Its function is as follows. Displays three enzymatic activities: serine protease, NTPase and RNA helicase. NS3 serine protease, in association with NS2B, performs its autocleavage and cleaves the polyprotein at dibasic sites in the cytoplasm: C-prM, NS2A-NS2B, NS2B-NS3, NS3-NS4A, NS4A-2K and NS4B-NS5. NS3 RNA helicase binds RNA and unwinds dsRNA in the 3' to 5' direction. NS3 supports the separation of RNA daughter and template strands during viral replication. The helicase part is involved in the inhibition of phosphorylation of host STAT1, and thereby inhibition of host type-I IFN signaling. In addition, NS3 assists the initiation of replication by unwinding the RNA secondary structure in the 3' non-translated region (NTR). Inhibits STAT2 translocation in the nucleus after IFN-alpha treatment. In terms of biological role, facilitates host membrane remodelling necessary for viral replication by interacting with host RTN3. Regulates the ATPase activity of the NS3 helicase activity. NS4A allows NS3 helicase to conserve energy during unwinding. Functions as a signal peptide for NS4B and is required for the interferon antagonism activity of the latter. Functionally, induces the formation of ER-derived membrane vesicles where the viral replication takes place. Inhibits interferon (IFN)-induced host STAT1 phosphorylation and nuclear translocation, thereby preventing the establishment of cellular antiviral state by blocking the IFN-alpha/beta pathway. Inhibits STAT2 translocation in the nucleus after IFN-alpha treatment. Its function is as follows. Replicates the viral (+) and (-) genome, and performs the capping of genomes in the cytoplasm. NS5 methylates viral RNA cap at guanine N-7 and ribose 2'-O positions. Besides its role in RNA genome replication, also prevents the establishment of cellular antiviral state by blocking the interferon-alpha/beta (IFN-alpha/beta) signaling pathway. Inhibits host JAK1 and TYK2 phosphorylation, thereby preventing activation of JAK-STAT signaling pathway. This is Genome polyprotein from Aedes (Tropical bont tick).